The sequence spans 902 residues: Proline-rich transmembrane protein 4 (902 aa).

The signal sequence occupies residues 1-18; it reads MAGRSCLELGLFCWVLLA. Disordered regions lie at residues 72 to 92, 121 to 149, and 281 to 333; these read TETH…EEGD, TPWA…SQPR, and SPSS…LLDD. Composition is skewed to polar residues over residues 122 to 136 and 281 to 302; these read PWAS…SRLS and SPSS…STSG. A run of 5 helical transmembrane segments spans residues 371 to 391, 393 to 413, 432 to 452, 468 to 488, and 501 to 521; these read AGAL…LLPW, CPPG…AGTT, LVWL…LGLA, LAAL…GSAV, and GLHA…SCWG. Ser642 carries the phosphoserine modification. Disordered regions lie at residues 701–723, 774–811, and 839–872; these read AGAN…DFRP, AGPS…SLCG, and PPRP…ASEL. The span at 704 to 717 shows a compositional bias: polar residues; the sequence is NPTQSTASSPSSDC. A compositionally biased stretch (pro residues) spans 786–798; that stretch reads SPAPPELPSPGAW. 2 stretches are compositionally biased toward low complexity: residues 799 to 811 and 843 to 854; these read PPGS…SLCG and SESSPSLPASGS.

It localises to the membrane. In Mus musculus (Mouse), this protein is Proline-rich transmembrane protein 4 (Prrt4).